The following is a 547-amino-acid chain: Methionine--tRNA ligase (547 aa).

The 'HIGH' region motif lies at 13 to 23 (PYANGPLHIGH). Zn(2+) contacts are provided by Cys145, Cys148, Cys158, and Cys161. The 'KMSKS' region signature appears at 334 to 338 (QFSKS). Lys337 is a binding site for ATP.

The protein belongs to the class-I aminoacyl-tRNA synthetase family. MetG type 1 subfamily. It depends on Zn(2+) as a cofactor.

The protein resides in the cytoplasm. The catalysed reaction is tRNA(Met) + L-methionine + ATP = L-methionyl-tRNA(Met) + AMP + diphosphate. In terms of biological role, is required not only for elongation of protein synthesis but also for the initiation of all mRNA translation through initiator tRNA(fMet) aminoacylation. The protein is Methionine--tRNA ligase of Thermoplasma acidophilum (strain ATCC 25905 / DSM 1728 / JCM 9062 / NBRC 15155 / AMRC-C165).